Consider the following 422-residue polypeptide: Growth arrest-specific protein 7 (422 aa).

Residues 1–117 (MATALQKPGM…SPGRKQSKEN (117 aa)) form a disordered region. The region spanning 22–55 (VILPPGWHSYLSPQGRRYYVNTTTNETTWERPSS) is the WW domain. The span at 41-52 (VNTTTNETTWER) shows a compositional bias: polar residues. The segment covering 53-65 (PSSSPGISASPGP) has biased composition (low complexity). S62 and S108 each carry phosphoserine. A compositionally biased stretch (polar residues) spans 95–117 (RKSTGDSQNLGSSSPGRKQSKEN). Residues 141-402 (TEWSYCDYFW…LLRKVDPAKD (262 aa)) enclose the F-BAR domain. A coiled-coil region spans residues 254–329 (ENFKKDMKKC…RKSTQAGDDL (76 aa)).

It is found in the cytoplasm. In terms of biological role, may play a role in promoting maturation and morphological differentiation of cerebellar neurons. The protein is Growth arrest-specific protein 7 (Gas7) of Rattus norvegicus (Rat).